Consider the following 604-residue polypeptide: SAGA complex subunit SPT20 (604 aa).

Disordered regions lie at residues 1–33, 223–273, and 422–446; these read MSAN…SPVN, DVTP…NKKA, and SSSS…RNNS. 2 stretches are compositionally biased toward low complexity: residues 231 to 249 and 258 to 272; these read PNLN…QDNS and NSGV…ANKK. Serine 446 bears the Phosphoserine mark. The residue at position 516 (threonine 516) is a Phosphothreonine. Low complexity-rich tracts occupy residues 519–533 and 547–559; these read QQLL…EQQQ and NNAT…NNNN. Residues 519-604 form a disordered region; that stretch reads QQLLQRQQQA…SSTPSSTTMS (86 aa). The segment covering 582-592 has biased composition (basic residues); that stretch reads PKKKRMTKKKQ. Residues 593 to 604 are compositionally biased toward low complexity; sequence SASSTPSSTTMS.

This sequence belongs to the SPT20 family. Component of the 1.8 MDa SAGA (Spt-Ada-Gcn5 acetyltransferase) complex, which is composed of 19 subunits TRA1, SPT7, TAF5, NGG1/ADA3, SGF73, SPT20/ADA5, SPT8, TAF12, TAF6, HFI1/ADA1, UBP8, GCN5, ADA2, SPT3, SGF29, TAF10, TAF9, SGF11 and SUS1. The SAGA complex is composed of 4 modules, namely the HAT (histone acetyltransferase) module (GCN5, ADA2, NGG1/ADA3 and SGF29), the DUB (deubiquitinating) module (UBP8, SGF11, SGF73 and SUS1), the core or TAF (TBP-associated factor) module (TAF5, TAF6, TAF9, TAF10 and TAF12), and the Tra1 or SPT (Suppressor of Ty) module (TRA1, HFI1/ADA1, SPT3, SPT7, SPT8 and SPT20/ADA5). The Tra1/SPT module binds activators, the core module recruits TBP (TATA-binding protein), the HAT module contains the histone H3 acetyltransferase GCN5, and the DUB module comprises the histone H2B deubiquitinase UBP8. Also identified in an altered form of SAGA, named SALSA (SAGA altered, Spt8 absent) or SLIK (SAGA-like) complex, which contains a C-terminal truncated form of SPT7 and is missing SPT8. However, it has been shown that the SAGA and SAGA-like SALSA/SLIK transcriptional coactivators are structurally and biochemically equivalent. Component of an ADA/GCN5 complex that consists of HFI1/ADA1, ADA2, NGG1/ADA3, SPT20/ADA5 and GCN5 and probably is a subcomplex of SAGA.

The protein localises to the nucleus. Its function is as follows. Component of the transcription coactivator SAGA complex. SAGA acts as a general cofactor required for essentially all RNA polymerase II transcription. At the promoters, SAGA is required for transcription pre-initiation complex (PIC) recruitment. It influences RNA polymerase II transcriptional activity through different activities such as TBP interaction (via core/TAF module) and promoter selectivity, interaction with transcription activators (via Tra1/SPT module), and chromatin modification through histone acetylation (via HAT module) and deubiquitination (via DUB module). SAGA preferentially acetylates histones H3 (to form H3K9ac, H3K14ac, H3K18ac and H3K23ac) and H2B and deubiquitinates histone H2B. SAGA interacts with DNA via upstream activating sequences (UASs). Also identified in a modified version of SAGA named SALSA or SLIK. The cleavage of SPT7 and the absence of the SPT8 subunit in SLIK neither drive any major conformational differences in its structure compared with SAGA, nor significantly affect HAT, DUB, or DNA-binding activities. Involved in RNA processing, required for the IRE1/RLG1-dependent splicing reaction of HAC1 mRNA. This is SAGA complex subunit SPT20 (SPT20) from Saccharomyces cerevisiae (strain ATCC 204508 / S288c) (Baker's yeast).